The chain runs to 172 residues: Putative metal-dependent hydrolase OB0782 (172 aa).

Positions 64, 155, and 159 each coordinate Zn(2+).

It belongs to the metal hydrolase YfiT family. As to quaternary structure, homodimer. Zn(2+) serves as cofactor.

The protein localises to the cytoplasm. In terms of biological role, possible metal-dependent hydrolase. The protein is Putative metal-dependent hydrolase OB0782 of Oceanobacillus iheyensis (strain DSM 14371 / CIP 107618 / JCM 11309 / KCTC 3954 / HTE831).